A 515-amino-acid polypeptide reads, in one-letter code: Low affinity ammonium transporter (515 aa).

Topologically, residues 1–78 (MSTSSSVTQK…IIGNSFGTTN (78 aa)) are extracellular. The chain crosses the membrane as a helical span at residues 79–99 (AGQLSWFASAYSLTVGTFILI). The Cytoplasmic segment spans residues 100-111 (AGRLGDIFGHKK). The chain crosses the membrane as a helical span at residues 112–132 (FFVLGFFWYALWSLLAGFSVY). The Extracellular segment spans residues 133–140 (SNQIFFDC). Residues 141–161 (CRAFQGMGPAFLLPNAIAILG) form a helical membrane-spanning segment. Residues 162–171 (RTYKPGRRKN) are Cytoplasmic-facing. Residues 172-192 (MVFSLFGASAPGGFFLGAVFS) traverse the membrane as a helical segment. Residues 193 to 202 (SMLGQLAWWP) are Extracellular-facing. A helical transmembrane segment spans residues 203–223 (WAYWIMGIACFVLAVAGYFVI). Over 224–241 (PHTPMPSRDASSFKLLER) the chain is Cytoplasmic. Residues 242–262 (IDFAGSVTGVVGLILFNFAWN) form a helical membrane-spanning segment. Residues 263–270 (QGPVVGWQ) are Extracellular-facing. The helical transmembrane segment at 271 to 291 (TPYTYALLIVGTFFLVIFAYI) threads the bilayer. The Cytoplasmic portion of the chain corresponds to 292-310 (ESRAAFPLLPFAALSSDTA). Residues 311–331 (FVLSCIAAGWASFGIWIFYTW) traverse the membrane as a helical segment. The Extracellular portion of the chain corresponds to 332–346 (QFMEDSRGQTPLLSS). The chain crosses the membrane as a helical span at residues 347–367 (AQFSPVAISGFCAAVTTGFLL). The Cytoplasmic portion of the chain corresponds to 368–374 (SHTPPST). Residues 375–395 (VMLFAMTAFTVGTILIATAPV) traverse the membrane as a helical segment. Over 396–403 (HQTYWAQT) the chain is Extracellular. A helical transmembrane segment spans residues 404–424 (FVSIIVMPWGMDMSFPAATIM). The Cytoplasmic portion of the chain corresponds to 425 to 435 (LSDSMPHEHQG). A helical membrane pass occupies residues 436-456 (LAASLVNTVVNYSISIGLGIA). Residues 457 to 479 (GTIESRVNDGGAKPLKGYRCSWY) are Extracellular-facing. A helical membrane pass occupies residues 480–500 (MGIGLSGLGIFVAATYAWSTF). At 501–515 (MKSKKRISEKQHFIE) the chain is on the cytoplasmic side.

The protein belongs to the major facilitator superfamily.

Its subcellular location is the cell membrane. Low affinity ammonium transporter of the plasma membrane. May be involved in drug resistance through pumping them out of the cell. This chain is Low affinity ammonium transporter, found in Saccharomyces cerevisiae (strain ATCC 204508 / S288c) (Baker's yeast).